Here is a 336-residue protein sequence, read N- to C-terminus: Aspartate--ammonia ligase (336 aa).

Belongs to the class-II aminoacyl-tRNA synthetase family. AsnA subfamily.

Its subcellular location is the cytoplasm. The enzyme catalyses L-aspartate + NH4(+) + ATP = L-asparagine + AMP + diphosphate + H(+). It functions in the pathway amino-acid biosynthesis; L-asparagine biosynthesis; L-asparagine from L-aspartate (ammonia route): step 1/1. The chain is Aspartate--ammonia ligase from Lactobacillus acidophilus (strain ATCC 700396 / NCK56 / N2 / NCFM).